The chain runs to 243 residues: MSGHSKWHNIQGRKNAQDAKRGKVFQKLSREIYMAAKSGGPDPSGNPTLRMVMDKARAANMPKTNIERAIKKAEGNSDEHYDEITYEGYAPGGVAVLVEALTDNKNRTASDVRVAFTRNGGSLGATGSVAYMFDRKGYLVIDRSTTDADEDQVLLDVMDAGGDDLETSDDAFEIYTDPKQFTAVRDALEKAGYKLANAELTMIPQNTTPVPADKKEQFAHLIDALEDNDDVSNVYTAAADDDE.

The interval 1 to 22 is disordered; sequence MSGHSKWHNIQGRKNAQDAKRG.

The protein belongs to the TACO1 family.

The protein localises to the cytoplasm. This is Probable transcriptional regulatory protein LJ_0904 from Lactobacillus johnsonii (strain CNCM I-12250 / La1 / NCC 533).